A 251-amino-acid chain; its full sequence is Imidazole glycerol phosphate synthase subunit HisF (251 aa).

Catalysis depends on residues Asp-11 and Asp-130.

It belongs to the HisA/HisF family. As to quaternary structure, heterodimer of HisH and HisF.

Its subcellular location is the cytoplasm. It carries out the reaction 5-[(5-phospho-1-deoxy-D-ribulos-1-ylimino)methylamino]-1-(5-phospho-beta-D-ribosyl)imidazole-4-carboxamide + L-glutamine = D-erythro-1-(imidazol-4-yl)glycerol 3-phosphate + 5-amino-1-(5-phospho-beta-D-ribosyl)imidazole-4-carboxamide + L-glutamate + H(+). The protein operates within amino-acid biosynthesis; L-histidine biosynthesis; L-histidine from 5-phospho-alpha-D-ribose 1-diphosphate: step 5/9. IGPS catalyzes the conversion of PRFAR and glutamine to IGP, AICAR and glutamate. The HisF subunit catalyzes the cyclization activity that produces IGP and AICAR from PRFAR using the ammonia provided by the HisH subunit. The chain is Imidazole glycerol phosphate synthase subunit HisF from Streptococcus mutans serotype c (strain ATCC 700610 / UA159).